The chain runs to 368 residues: Phospho-N-acetylmuramoyl-pentapeptide-transferase (368 aa).

A run of 9 helical transmembrane segments spans residues 30-50 (AAAITALLITLLIGPKLIAYL), 72-92 (LPTMGGLLIIFAFELSVFLWA), 99-119 (VWLVMVAVLWMGAVGFLDDYL), 135-155 (LIGQVLLGLLVGLYAWFDPSM), 170-190 (LTINYGIFYVPVVIFIITAIS), 201-221 (GLAAGTSAIAFIGLAGFAYLA), 238-258 (GGEVAIVSMALVMACVGFLWF), 265-286 (IIMGDTGSLALGSAMAVIALLI), and 345-365 (KIVIRFWIMAILFFLASLMTL).

The protein belongs to the glycosyltransferase 4 family. MraY subfamily. The cofactor is Mg(2+).

It localises to the cell inner membrane. The enzyme catalyses UDP-N-acetyl-alpha-D-muramoyl-L-alanyl-gamma-D-glutamyl-meso-2,6-diaminopimeloyl-D-alanyl-D-alanine + di-trans,octa-cis-undecaprenyl phosphate = di-trans,octa-cis-undecaprenyl diphospho-N-acetyl-alpha-D-muramoyl-L-alanyl-D-glutamyl-meso-2,6-diaminopimeloyl-D-alanyl-D-alanine + UMP. Its pathway is cell wall biogenesis; peptidoglycan biosynthesis. Functionally, catalyzes the initial step of the lipid cycle reactions in the biosynthesis of the cell wall peptidoglycan: transfers peptidoglycan precursor phospho-MurNAc-pentapeptide from UDP-MurNAc-pentapeptide onto the lipid carrier undecaprenyl phosphate, yielding undecaprenyl-pyrophosphoryl-MurNAc-pentapeptide, known as lipid I. The polypeptide is Phospho-N-acetylmuramoyl-pentapeptide-transferase (Chlorobium chlorochromatii (strain CaD3)).